Here is a 438-residue protein sequence, read N- to C-terminus: Acid phosphatase type 7 (438 aa).

Positions 1 to 26 (MHPLPGYWSCYCLLLLFSLGVQGSLG) are cleaved as a signal peptide. Fe cation is bound by residues Asp141, Asp170, and Tyr173. Residue Asp170 coordinates Zn(2+). Asn205 serves as a coordination point for Zn(2+). Asn211 is a glycosylation site (N-linked (GlcNAc...) asparagine). His286 and His333 together coordinate Zn(2+). His335 lines the Fe cation pocket. Residues Asn350 and Asn404 are each glycosylated (N-linked (GlcNAc...) asparagine).

The protein belongs to the metallophosphoesterase superfamily. Purple acid phosphatase family. Fe cation serves as cofactor. Requires Zn(2+) as cofactor.

The protein resides in the secreted. It catalyses the reaction a phosphate monoester + H2O = an alcohol + phosphate. This Homo sapiens (Human) protein is Acid phosphatase type 7.